The sequence spans 522 residues: Protein nucleotidyltransferase YdiU (522 aa).

Residues glycine 109, glycine 111, arginine 112, lysine 132, aspartate 144, glycine 145, arginine 195, and arginine 202 each coordinate ATP. The Proton acceptor role is filled by aspartate 271. Residues asparagine 272 and aspartate 281 each coordinate Mg(2+). An ATP-binding site is contributed by aspartate 281.

The protein belongs to the SELO family. Mg(2+) is required as a cofactor. The cofactor is Mn(2+).

The enzyme catalyses L-seryl-[protein] + ATP = 3-O-(5'-adenylyl)-L-seryl-[protein] + diphosphate. It catalyses the reaction L-threonyl-[protein] + ATP = 3-O-(5'-adenylyl)-L-threonyl-[protein] + diphosphate. The catalysed reaction is L-tyrosyl-[protein] + ATP = O-(5'-adenylyl)-L-tyrosyl-[protein] + diphosphate. It carries out the reaction L-histidyl-[protein] + UTP = N(tele)-(5'-uridylyl)-L-histidyl-[protein] + diphosphate. The enzyme catalyses L-seryl-[protein] + UTP = O-(5'-uridylyl)-L-seryl-[protein] + diphosphate. It catalyses the reaction L-tyrosyl-[protein] + UTP = O-(5'-uridylyl)-L-tyrosyl-[protein] + diphosphate. Nucleotidyltransferase involved in the post-translational modification of proteins. It can catalyze the addition of adenosine monophosphate (AMP) or uridine monophosphate (UMP) to a protein, resulting in modifications known as AMPylation and UMPylation. The chain is Protein nucleotidyltransferase YdiU from Burkholderia vietnamiensis (strain G4 / LMG 22486) (Burkholderia cepacia (strain R1808)).